We begin with the raw amino-acid sequence, 116 residues long: MNIYAIYINSTQKNNNFIILEEGFSWIAALFSIFWALYHKMWIVVAITVIANIIATTIIVDFKFIFQIFLILSFGFFAADIRENYLNRNNYQLEDIIIANSRIEAELKFLERSILI.

The chain crosses the membrane as a helical span at residues 58-78; sequence IIVDFKFIFQIFLILSFGFFA.

It is found in the membrane. This is an uncharacterized protein from Rickettsia prowazekii (strain Madrid E).